A 683-amino-acid polypeptide reads, in one-letter code: DNA ligase (683 aa).

Residues 36–40 (DAEYD), 85–86 (SL), and glutamate 119 contribute to the NAD(+) site. Lysine 121 acts as the N6-AMP-lysine intermediate in catalysis. The NAD(+) site is built by arginine 142, glutamate 179, lysine 295, and lysine 319. 4 residues coordinate Zn(2+): cysteine 413, cysteine 416, cysteine 431, and cysteine 437. Residues 596–683 (TETLPLSGQT…EHQAHLGGEA (88 aa)) form the BRCT domain.

It belongs to the NAD-dependent DNA ligase family. LigA subfamily. It depends on Mg(2+) as a cofactor. Mn(2+) serves as cofactor.

It catalyses the reaction NAD(+) + (deoxyribonucleotide)n-3'-hydroxyl + 5'-phospho-(deoxyribonucleotide)m = (deoxyribonucleotide)n+m + AMP + beta-nicotinamide D-nucleotide.. DNA ligase that catalyzes the formation of phosphodiester linkages between 5'-phosphoryl and 3'-hydroxyl groups in double-stranded DNA using NAD as a coenzyme and as the energy source for the reaction. It is essential for DNA replication and repair of damaged DNA. The chain is DNA ligase from Hahella chejuensis (strain KCTC 2396).